We begin with the raw amino-acid sequence, 237 residues long: Large ribosomal subunit protein uL1 (237 aa).

Belongs to the universal ribosomal protein uL1 family. As to quaternary structure, part of the 50S ribosomal subunit.

In terms of biological role, binds directly to 23S rRNA. The L1 stalk is quite mobile in the ribosome, and is involved in E site tRNA release. Protein L1 is also a translational repressor protein, it controls the translation of the L11 operon by binding to its mRNA. The chain is Large ribosomal subunit protein uL1 from Chloroflexus aggregans (strain MD-66 / DSM 9485).